The sequence spans 1019 residues: MFLEINFYSTFFQRRPSLWKERCKFEEVDAQGNSISYSHHPPDLTGQRSPLTPTTMRIVDRIPTVVGFRVIPTTVLVLLTYLTIFTLVIVTDWLPEPPKNQNGLDLKQAYTDLRHITAHPHPYNSHYNDAVHDYILSRVRPVAASTSFVHISDDQTSNGSWASPGYGVYFEGTNILVKIDGKSSNGNDGVLFSAHYDSVSTAPGATDDGMGVVTLLQLIDYFAKHRPDRTAIFNINNGEEDWLNGAHAFLQHTWSNLTDTFLNLEGAAAGGRPILFRATSTSPVRAFRSDYVPHPHANVISSDAFARGVIRSGTDYEVYTGAGAEMEGLDVAFYKGRSRYHTKYDAVPYTNGGERSLWAMMETAQGAGNALLNAKRHKQDQGSGGTPVYFDLVKAELVIFYLNDLLIYNVVSLVVGPISLIFFVVCEYVLRNERARQPNGHPVSRPSVLEWLKQRSWLRALWRRSKFWIALVITIALQALLVWGYLAFNSFTVYSSPYLVLISFFSLAYLSLVIPLTFTFNQTQSPTAKYIAPEREKHTLLIQVYIFTWILLLFSTIAVARAQVGGLYFVTAWNTGVWIACLLAAVEGMMLPVPQGGPRVRFHSAHHHHHHEHEEDQDADDDDREQRQPPTEATPLIGYSRASLRKPQEGGVVGWWIVHLLLTIPAPVLLIAQMGSLLLDSLPQTLADGSPAYVVYAAASLTAVLLAVPLTPFSGKLHRGLFFLFFLSFLIVTAYLWLAFPFSSADPLKVFFQQKVTLSNVVSERHSSIMGLSNSTVHPTAGVRKVVTAITGTPYYLKNEIIPRLPSASGKELKCRDEKAKRGLVTCEWESTLVPSPGGRNPWEDDFAAAQGRVGATSKSRQSWFKAEVARTGVRKGQIVLQGRNTRSCRLYFDSRPIIKYVVEGGHEGMQKGYEVGKVGASEVRLWSRTRDREFVVDFEWEDDDGREGEGITGRIACEWVEYESGNLDNGDGQWDLQRGGGERAKIPAFEEVLAFLPEWAVASKTTDGLVEAWSPFSV.

Over M1–R69 the chain is Cytoplasmic. A helical membrane pass occupies residues V70–V90. Residues T91–D404 are Vacuolar-facing. N-linked (GlcNAc...) asparagine glycosylation is present at N158. Zn(2+) is bound by residues H195 and D207. The Proton acceptor role is filled by E239. E240 contacts Zn(2+). The N-linked (GlcNAc...) asparagine glycan is linked to N256. Zn(2+) is bound by residues E265 and H341. Residues L405 to V425 traverse the membrane as a helical segment. The Cytoplasmic segment spans residues C426–K466. Residues F467–A487 form a helical membrane-spanning segment. The Vacuolar portion of the chain corresponds to F488–P497. Residues Y498 to F518 traverse the membrane as a helical segment. Topologically, residues T519–T539 are cytoplasmic. Residues L540–A560 traverse the membrane as a helical segment. Residues R561–G565 are Vacuolar-facing. A helical transmembrane segment spans residues G566 to V586. Residues E587–G651 lie on the Cytoplasmic side of the membrane. The interval H603–T634 is disordered. The helical transmembrane segment at V652–A672 threads the bilayer. The Vacuolar segment spans residues Q673 to A692. Residues Y693–F713 traverse the membrane as a helical segment. Topologically, residues S714 to R719 are cytoplasmic. The chain crosses the membrane as a helical span at residues G720–F740. The Vacuolar portion of the chain corresponds to P741–V1019. N-linked (GlcNAc...) asparagine glycosylation is present at N774.

The protein belongs to the peptidase M28 family. Requires Zn(2+) as cofactor.

It localises to the vacuole membrane. May be involved in vacuolar sorting and osmoregulation. The polypeptide is Vacuolar membrane protease (Laccaria bicolor (strain S238N-H82 / ATCC MYA-4686) (Bicoloured deceiver)).